The sequence spans 271 residues: MLKIAETEFGSRLFTGTGKFASGKLMQEAIAASGSELVTLAMKRVDFKTGSDDILAPLLSRGVRLLPNTSGARNAKEAIFAAELAREMLGTEWLKLEIHPDPKYLMPDPMETFAAAKELVSQGFKVLPYVHADPVLCRRLEEIGCAAVMPLGSPIGSNQGLVSREFLKIIIEQASIPVVVDAGIGAPSHACEAMELGADAVLVNTAIASSADPVRMARAFALAVQIGREAYLAGLGSKSLHAHETSPLTGFLNTGLSTTGLVDSGMAEKLL.

Lysine 95 (schiff-base intermediate with DXP) is an active-site residue. 1-deoxy-D-xylulose 5-phosphate-binding positions include glycine 156, 182-183 (AG), and 204-205 (NT).

Belongs to the ThiG family. In terms of assembly, homotetramer. Forms heterodimers with either ThiH or ThiS.

The protein localises to the cytoplasm. The enzyme catalyses [ThiS sulfur-carrier protein]-C-terminal-Gly-aminoethanethioate + 2-iminoacetate + 1-deoxy-D-xylulose 5-phosphate = [ThiS sulfur-carrier protein]-C-terminal Gly-Gly + 2-[(2R,5Z)-2-carboxy-4-methylthiazol-5(2H)-ylidene]ethyl phosphate + 2 H2O + H(+). It participates in cofactor biosynthesis; thiamine diphosphate biosynthesis. In terms of biological role, catalyzes the rearrangement of 1-deoxy-D-xylulose 5-phosphate (DXP) to produce the thiazole phosphate moiety of thiamine. Sulfur is provided by the thiocarboxylate moiety of the carrier protein ThiS. In vitro, sulfur can be provided by H(2)S. In Shewanella amazonensis (strain ATCC BAA-1098 / SB2B), this protein is Thiazole synthase.